The sequence spans 226 residues: ATP synthase F(0) complex subunit a (226 aa).

Transmembrane regions (helical) follow at residues 6 to 26 (FASF…IIMF), 68 to 88 (WSLM…LGLL), 97 to 117 (QLSM…ITGF), 138 to 158 (IPML…ALAV), 164 to 184 (ITAG…LTSI), and 189 to 209 (AILT…VALI).

It belongs to the ATPase A chain family. In terms of assembly, component of the ATP synthase complex composed at least of ATP5F1A/subunit alpha, ATP5F1B/subunit beta, ATP5MC1/subunit c (homooctomer), MT-ATP6/subunit a, MT-ATP8/subunit 8, ATP5ME/subunit e, ATP5MF/subunit f, ATP5MG/subunit g, ATP5MK/subunit k, ATP5MJ/subunit j, ATP5F1C/subunit gamma, ATP5F1D/subunit delta, ATP5F1E/subunit epsilon, ATP5PF/subunit F6, ATP5PB/subunit b, ATP5PD/subunit d, ATP5PO/subunit OSCP. ATP synthase complex consists of a soluble F(1) head domain (subunits alpha(3) and beta(3)) - the catalytic core - and a membrane F(0) domain - the membrane proton channel (subunits c, a, 8, e, f, g, k and j). These two domains are linked by a central stalk (subunits gamma, delta, and epsilon) rotating inside the F1 region and a stationary peripheral stalk (subunits F6, b, d, and OSCP). Interacts with DNAJC30; interaction is direct.

It is found in the mitochondrion inner membrane. The catalysed reaction is H(+)(in) = H(+)(out). In terms of biological role, subunit a, of the mitochondrial membrane ATP synthase complex (F(1)F(0) ATP synthase or Complex V) that produces ATP from ADP in the presence of a proton gradient across the membrane which is generated by electron transport complexes of the respiratory chain. ATP synthase complex consist of a soluble F(1) head domain - the catalytic core - and a membrane F(1) domain - the membrane proton channel. These two domains are linked by a central stalk rotating inside the F(1) region and a stationary peripheral stalk. During catalysis, ATP synthesis in the catalytic domain of F(1) is coupled via a rotary mechanism of the central stalk subunits to proton translocation. With the subunit c (ATP5MC1), forms the proton-conducting channel in the F(0) domain, that contains two crucial half-channels (inlet and outlet) that facilitate proton movement from the mitochondrial intermembrane space (IMS) into the matrix. Protons are taken up via the inlet half-channel and released through the outlet half-channel, following a Grotthuss mechanism. In Ictidomys tridecemlineatus (Thirteen-lined ground squirrel), this protein is ATP synthase F(0) complex subunit a.